Here is a 250-residue protein sequence, read N- to C-terminus: Cruxrhodopsin-3 (250 aa).

Topologically, residues 1 to 9 are extracellular; the sequence is MPAPEGEAI. The chain crosses the membrane as a helical span at residues 10 to 27; it reads WLWLGTAGMFLGMLYFIA. The Cytoplasmic portion of the chain corresponds to 28 to 41; it reads RGWGETDSRRQKFY. A helical membrane pass occupies residues 42–60; sequence IATILITAIAFVNYLAMAL. Topologically, residues 61-77 are extracellular; it reads GFGLTIVEIAGEQRPIY. A helical transmembrane segment spans residues 78-94; sequence WARYSDWLFTTPLLLYD. Residues 95 to 105 are Cytoplasmic-facing; that stretch reads LGLLAGADRNT. The chain crosses the membrane as a helical span at residues 106–125; sequence ISSLVSLDVLMIGTGLVATL. The Extracellular portion of the chain corresponds to 126 to 138; it reads SAGSGVLSAGAER. A helical membrane pass occupies residues 139–158; that stretch reads LVWWGISTAFLLVLLYFLFS. Over 159–176 the chain is Cytoplasmic; the sequence is SLSGRVADLPSDTRSTFK. The chain crosses the membrane as a helical span at residues 177–195; it reads TLRNLVTVVWLVYPVWWLV. The Extracellular segment spans residues 196-207; the sequence is GTEGIGLVGIGI. The chain crosses the membrane as a helical span at residues 208–227; it reads ETAGFMVIDLVAKVGFGIIL. Position 220 is an N6-(retinylidene)lysine (K220). Topologically, residues 228–250 are cytoplasmic; that stretch reads LRSHGVLDGAAETTGAGATATAD.

Belongs to the archaeal/bacterial/fungal opsin family. In terms of assembly, homotrimer. Binds bacterioruberin in the crevice between neighboring subunits.

Its subcellular location is the cell membrane. Light-driven proton pump. This chain is Cruxrhodopsin-3 (cop3), found in Haloarcula vallismortis (Halobacterium vallismortis).